Consider the following 739-residue polypeptide: Trehalose phosphorylase (739 aa).

A propeptide spanning residues 1 to 26 (MSTPHHQFESKSSTAIRRRLSSSVSS) is cleaved from the precursor. The tract at residues 1–28 (MSTPHHQFESKSSTAIRRRLSSSVSSKQ) is disordered.

Belongs to the glycosyltransferase group 1 family. Glycosyltransferase 4 subfamily. Homodimer.

The catalysed reaction is alpha,alpha-trehalose + phosphate = alpha-D-glucose + alpha-D-glucose 1-phosphate. Functionally, reversibly catalyzes the synthesis and degradation of trehalose from glucose and alpha-D-glucose 1-phosphate. The equilibrium lies in the direction of trehalose synthesis. The sequence is that of Trehalose phosphorylase from Pleurotus pulmonarius (Indian oyster mushroom).